The chain runs to 777 residues: Protein argonaute (777 aa).

The segment at 1-107 (MAPVQAADEM…ARLDDALEEA (107 aa)) is N-terminal domain. The linker L1 stretch occupies residues 108 to 182 (LPKYAAVKKR…TIGMRYDIEA (75 aa)). Residues 183-243 (SLRDLLEAGI…VNVNDAKLEG (61 aa)) form a PAZ domain region. A linker L2 region spans residues 244–341 (SKENFTRCLS…DRTGAKSAEY (98 aa)). Residues 342–509 (AWRGLSQFGP…SIATYAKLNG (168 aa)) are mid domain. The Piwi domain occupies 445-757 (GIVVLFEDHA…IAELLGRLKS (313 aa)). The segment at 510–777 (TPWTVNHDKA…IKLKWSRWFL (268 aa)) is PIWI domain. Mg(2+) is bound at residue leucine 777.

It belongs to the argonaute family. Long pAgo subfamily. The cofactor is Mg(2+).

In terms of biological role, a catalytically inactive argonaute protein. Binds 5'-phosphorylated RNA as the guide (gRNA) and short DNA as target DNA (tDNA); does not bind other nucleic acid combinations, does not bind tDNA alone. Has highest affinity for gRNA that begins with 5'-phospho-U and poor affinity for gRNA with 5'-OH. Upon expression in E.coli, plasmid sequences are found in RsAgo, its induction leads to plasmid degradation and suppression of genes encoded on foreign plasmids, suggesting it may also interfere with transcription. Does not interact with preformed gRNA:tDNA duplexes. Mismatches and nt bulges are tolerated in the ternary complex, however, they significantly reduce the affinity of RsAgo:gRNA for tDNA. Mismatched tDNA can cause dissociation of gRNA from RsAgo. In situ binds 2 populations of RNA (15-19 and 45 nucleotides, nt) and a population of ssDNA 22-24 nt in length. The small sense RNA is probably derived from mRNA degradation and strongly enriched for U in the first and U/C in the second positions. The small DNA is enriched for sequences complementary to the RNA, with 3 nt overhangs on both ends; another nuclease may trim the ends. The sequences are largely derived from exogenous plasmids or genome-encoded foreign elements such as prophages and transposons. Forms a ternary complex with gRNA and double-stranded tDNA only when the tDNA is open. This is Protein argonaute from Cereibacter sphaeroides (strain ATCC 17025 / ATH 2.4.3) (Rhodobacter sphaeroides).